A 546-amino-acid polypeptide reads, in one-letter code: Chaperonin GroEL (546 aa).

ATP is bound by residues T30 to P33, D87 to T91, G414, N477 to L479, and D493.

It belongs to the chaperonin (HSP60) family. As to quaternary structure, forms a cylinder of 14 subunits composed of two heptameric rings stacked back-to-back. Interacts with the co-chaperonin GroES.

The protein resides in the cytoplasm. The catalysed reaction is ATP + H2O + a folded polypeptide = ADP + phosphate + an unfolded polypeptide.. In terms of biological role, together with its co-chaperonin GroES, plays an essential role in assisting protein folding. The GroEL-GroES system forms a nano-cage that allows encapsulation of the non-native substrate proteins and provides a physical environment optimized to promote and accelerate protein folding. The chain is Chaperonin GroEL from Syntrophomonas wolfei subsp. wolfei (strain DSM 2245B / Goettingen).